Reading from the N-terminus, the 326-residue chain is Probable cell division protein WhiA (326 aa).

A DNA-binding region (H-T-H motif) is located at residues 275-308; it reads SLEELGALADPPLTKDAIAGRIRRLLALADKRAR.

The protein belongs to the WhiA family.

Involved in cell division and chromosome segregation. The polypeptide is Probable cell division protein WhiA (Salinispora arenicola (strain CNS-205)).